Reading from the N-terminus, the 578-residue chain is Proline--tRNA ligase (578 aa).

Belongs to the class-II aminoacyl-tRNA synthetase family. ProS type 1 subfamily. Homodimer.

Its subcellular location is the cytoplasm. The catalysed reaction is tRNA(Pro) + L-proline + ATP = L-prolyl-tRNA(Pro) + AMP + diphosphate. In terms of biological role, catalyzes the attachment of proline to tRNA(Pro) in a two-step reaction: proline is first activated by ATP to form Pro-AMP and then transferred to the acceptor end of tRNA(Pro). As ProRS can inadvertently accommodate and process non-cognate amino acids such as alanine and cysteine, to avoid such errors it has two additional distinct editing activities against alanine. One activity is designated as 'pretransfer' editing and involves the tRNA(Pro)-independent hydrolysis of activated Ala-AMP. The other activity is designated 'posttransfer' editing and involves deacylation of mischarged Ala-tRNA(Pro). The misacylated Cys-tRNA(Pro) is not edited by ProRS. The sequence is that of Proline--tRNA ligase from Burkholderia vietnamiensis (strain G4 / LMG 22486) (Burkholderia cepacia (strain R1808)).